A 360-amino-acid chain; its full sequence is Polyamine aminopropyltransferase 2 (360 aa).

A PABS domain is found at 68–299 (DIWDEISLKE…TDWGFHIAAN (232 aa)). Glutamine 94 contacts S-methyl-5'-thioadenosine. 2 residues coordinate spermidine: histidine 123 and aspartate 147. S-methyl-5'-thioadenosine is bound by residues aspartate 167 and 201–202 (DA). Catalysis depends on aspartate 219, which acts as the Proton acceptor.

Belongs to the spermidine/spermine synthase family. In terms of assembly, homodimer or homotetramer.

Its subcellular location is the cytoplasm. The catalysed reaction is S-adenosyl 3-(methylsulfanyl)propylamine + putrescine = S-methyl-5'-thioadenosine + spermidine + H(+). It participates in amine and polyamine biosynthesis; spermidine biosynthesis; spermidine from putrescine: step 1/1. Its function is as follows. Catalyzes the irreversible transfer of a propylamine group from the amino donor S-adenosylmethioninamine (decarboxy-AdoMet) to putrescine (1,4-diaminobutane) to yield spermidine. This Bacillus anthracis protein is Polyamine aminopropyltransferase 2.